The chain runs to 89 residues: Small ribosomal subunit protein bS20 (89 aa).

The span at 1–12 (MANIKSAKKRAK) shows a compositional bias: basic residues. Residues 1–22 (MANIKSAKKRAKQTIVRNERNT) form a disordered region.

It belongs to the bacterial ribosomal protein bS20 family.

Binds directly to 16S ribosomal RNA. This Xanthomonas oryzae pv. oryzae (strain KACC10331 / KXO85) protein is Small ribosomal subunit protein bS20.